The primary structure comprises 518 residues: Glutamate--cysteine ligase (518 aa).

This sequence belongs to the glutamate--cysteine ligase type 1 family. Type 1 subfamily.

It carries out the reaction L-cysteine + L-glutamate + ATP = gamma-L-glutamyl-L-cysteine + ADP + phosphate + H(+). It functions in the pathway sulfur metabolism; glutathione biosynthesis; glutathione from L-cysteine and L-glutamate: step 1/2. The sequence is that of Glutamate--cysteine ligase from Cronobacter sakazakii (strain ATCC BAA-894) (Enterobacter sakazakii).